The following is a 585-amino-acid chain: uncharacterized protein (585 aa).

The tract at residues 27 to 59 is disordered; it reads DDSERSVKSVSVSISDDEDSKTDVQDNMATPST.

This is an uncharacterized protein from Saccharomyces cerevisiae (strain ATCC 204508 / S288c) (Baker's yeast).